The following is a 377-amino-acid chain: UPF0754 membrane protein lmo2224 (377 aa).

A run of 2 helical transmembrane segments spans residues 1-21 and 357-377; these read MSVLFTILLMAVIGGFIGAMT and YLGGILGGFIGIIQGILAMWI.

The protein belongs to the UPF0754 family.

Its subcellular location is the cell membrane. This Listeria monocytogenes serovar 1/2a (strain ATCC BAA-679 / EGD-e) protein is UPF0754 membrane protein lmo2224.